The sequence spans 351 residues: Minor outer capsid protein P9 (351 aa).

The segment at glycine 246–aspartate 330 is disordered. Basic and acidic residues predominate over residues methionine 285–serine 298. A compositionally biased stretch (acidic residues) spans leucine 315–methionine 324.

This sequence belongs to the phytoreovirus minor outer capsid protein P9 family.

The protein resides in the virion. Its subcellular location is the host cytoplasm. Functionally, minor outer capsid protein. This chain is Minor outer capsid protein P9, found in Alopecurus aequalis (Barnyard grass).